We begin with the raw amino-acid sequence, 310 residues long: MNDVPENANEDCPGATSADAGKAFSCTGCPNQTLCASGEIRRPDSDLLAVTDRLKNVRHKILILSGKGGVGKSAVAANLARALAVNDKIQVGLLDIDICGPSQARMLGVEQESVHESGDGWCPIVVKDNLIVMSIAFLLQNRSEAVIWRGARKNALIKQFLKDVDWGTLDYLLIDTPPGTSDEHISIVQFLLQAGSVDGAIIVTTPQEISLLDVRKEINFCRRTKINILGIVENMSSFICPCCSNVSQLFPRTTGGAEMMCNELSVPLLALLPFDSHMAKCADSGEDYFEKYHNSALAKEFEKLAQLISK.

Residues Cys-12, Cys-26, Cys-29, and Cys-35 each coordinate [4Fe-4S] cluster. 66–73 (GKGGVGKS) contributes to the ATP binding site. The [4Fe-4S] cluster site is built by Cys-240 and Cys-243.

This sequence belongs to the Mrp/NBP35 ATP-binding proteins family. NUBP1/NBP35 subfamily. Heterotetramer of 2 NUBP1 and 2 NUBP2 chains. The cofactor is [4Fe-4S] cluster.

It localises to the cytoplasm. Its function is as follows. Component of the cytosolic iron-sulfur (Fe/S) protein assembly (CIA) machinery. Required for maturation of extramitochondrial Fe-S proteins. The NUBP1-NUBP2 heterotetramer forms a Fe-S scaffold complex, mediating the de novo assembly of an Fe-S cluster and its transfer to target apoproteins. The sequence is that of Cytosolic Fe-S cluster assembly factor NUBP1 homolog from Brugia malayi (Filarial nematode worm).